Here is a 392-residue protein sequence, read N- to C-terminus: Speckle-type POZ protein-like A (392 aa).

One can recognise an MATH domain in the interval 31 to 161; that stretch reads KFSYMWTINN…DDKLTLFCEV (131 aa). The region spanning 200-267 is the BTB domain; that stretch reads TDCSLYVGGQ…IYTGKAPNLE (68 aa).

This sequence belongs to the Tdpoz family. In terms of assembly, homodimer. Heterodimer with SPOP. Component of cullin-RING-based BCR (BTB-CUL3-RBX1) E3 ubiquitin-protein ligase complexes containing homodimeric SPOPL or the heterodimer formed by SPOP and SPOPL.

It localises to the nucleus. The protein operates within protein modification; protein ubiquitination. Its function is as follows. Component of a cullin-RING-based BCR (BTB-CUL3-RBX1) E3 ubiquitin-protein ligase complex that mediates the ubiquitination and subsequent proteasomal degradation of target proteins, but with relatively low efficiency. In Danio rerio (Zebrafish), this protein is Speckle-type POZ protein-like A (spopla).